We begin with the raw amino-acid sequence, 191 residues long: Ribosome assembly protein 3 (191 aa).

The disordered stretch occupies residues 1–101 (MAAAQVKNEK…NETHEKLSNI (101 aa)). Positions 32 to 42 (DSESSSSSSSD) are enriched in low complexity. The segment covering 50-59 (EEPKPIKETK) has biased composition (basic and acidic residues). Over residues 76–85 (VNSQEKQNSL) the composition is skewed to polar residues.

The protein belongs to the RSA3 family. Associates with nucleolar pre-ribosomal particles.

It is found in the nucleus. It localises to the nucleolus. Required for efficient biogenesis of the 60S ribosomal subunit. This Debaryomyces hansenii (strain ATCC 36239 / CBS 767 / BCRC 21394 / JCM 1990 / NBRC 0083 / IGC 2968) (Yeast) protein is Ribosome assembly protein 3 (RSA3).